Here is a 97-residue protein sequence, read N- to C-terminus: YcgL domain-containing protein PFL_1496 (97 aa).

The region spanning 3-87 (RICSIYKSPR…AEDEYIEHLP (85 aa)) is the YcgL domain.

This is YcgL domain-containing protein PFL_1496 from Pseudomonas fluorescens (strain ATCC BAA-477 / NRRL B-23932 / Pf-5).